The following is a 281-amino-acid chain: MSNSRSILSQPEWRIVDQSSLGPTFHALQSFAMDDTLCTSIGKGESAATMRSWVHHNTIVLGIQDSRLPHLEEGISFLKENNFNVIVRNSGGLAVVLDEGVLNVSLLFQETEKGIDIDLGYDTMWHLIQEMLKDYDVTIEAKEIVGSYCPGSYDLSIRDQKFAGISQRRIRGGVAVQIYLCATGSGSERAALVRDFYNLAIQGEETRFTYPEIVPSTMASLSELLDETITVQDLMMRLLKTLQQFAPKLTPSQLTIDEIPLYETNLQRIIDRNNKALGLEK.

A BPL/LPL catalytic domain is found at 44-250 (GESAATMRSW…TLQQFAPKLT (207 aa)). Residue Cys-149 is the Acyl-thioester intermediate of the active site.

Belongs to the octanoyltransferase LipL family.

The catalysed reaction is N(6)-octanoyl-L-lysyl-[glycine-cleavage complex H protein] + L-lysyl-[lipoyl-carrier protein] = N(6)-octanoyl-L-lysyl-[lipoyl-carrier protein] + L-lysyl-[glycine-cleavage complex H protein]. Its pathway is protein modification; protein lipoylation via endogenous pathway; protein N(6)-(lipoyl)lysine from octanoyl-[acyl-carrier-protein]. In terms of biological role, catalyzes the amidotransfer (transamidation) of the octanoyl moiety from octanoyl-GcvH to the lipoyl domain of the E2 subunit of lipoate-dependent enzymes. The polypeptide is Octanoyl-[GcvH]:protein N-octanoyltransferase (Bacillus anthracis).